A 106-amino-acid chain; its full sequence is NADH-quinone oxidoreductase subunit K (106 aa).

Helical transmembrane passes span 10–30 (IHYYLILAMIIFTIGVAGVMV), 35–55 (VLIFMSVELILNSVNLVFVTF), and 67–87 (VVFFVMAIAAAEAAIGLAIVI).

The protein belongs to the complex I subunit 4L family. NDH-1 is composed of 14 different subunits. Subunits NuoA, H, J, K, L, M, N constitute the membrane sector of the complex.

It is found in the cell inner membrane. It carries out the reaction a quinone + NADH + 5 H(+)(in) = a quinol + NAD(+) + 4 H(+)(out). Functionally, NDH-1 shuttles electrons from NADH, via FMN and iron-sulfur (Fe-S) centers, to quinones in the respiratory chain. The immediate electron acceptor for the enzyme in this species is believed to be ubiquinone. Couples the redox reaction to proton translocation (for every two electrons transferred, four hydrogen ions are translocated across the cytoplasmic membrane), and thus conserves the redox energy in a proton gradient. The protein is NADH-quinone oxidoreductase subunit K of Leptospira borgpetersenii serovar Hardjo-bovis (strain JB197).